A 248-amino-acid polypeptide reads, in one-letter code: MAAQSAPKVVLKSTTKMSLNERFTNMLKNKQPTPVNIRASMQQQQQLASARNRRLAQQMENRPSVQAALKLKQSLKQRLGKSNIQARLGRPIGALARGAIGGRGLPIIQRGLPRGGLRGGRATRTLLRGGMSLRGQNLLRGGRAVAPRMGLRRGGVRGRGGPGRGGLGRGAMGRGGIGGRGRGMIGRGRGGFGGRGRGRGRGRGALARPVLTKEQLDNQLDAYMSKTKGHLDAELDAYMAQTDPETND.

Residue alanine 2 is modified to N-acetylalanine. Position 33 is a phosphothreonine (threonine 33). Phosphoserine occurs at positions 40, 49, and 64. Residue lysine 70 forms a Glycyl lysine isopeptide (Lys-Gly) (interchain with G-Cter in SUMO2) linkage. The disordered stretch occupies residues 151-204 (LRRGGVRGRGGPGRGGLGRGAMGRGGIGGRGRGMIGRGRGGFGGRGRGRGRGRG). Positions 153–206 (RGGVRGRGGPGRGGLGRGAMGRGGIGGRGRGMIGRGRGGFGGRGRGRGRGRGAL) are interaction with PRMT1. Positions 157 to 195 (RGRGGPGRGGLGRGAMGRGGIGGRGRGMIGRGRGGFGGR) are enriched in gly residues. A GAR motif; involved in 5hmC binding motif is present at residues 194-203 (GRGRGRGRGR). Threonine 242 bears the Phosphothreonine mark.

In terms of assembly, interacts with PRMT1 and PRMT5. Interacts with the 5FMC complex; the interaction is methylation-dependent. Interacts with FYTTD1, SET and PRC1 complex members CBX4, RNF2 and PHC2; the interactions are methylation-independent. Interacts with ZNF148. Component of the transcription/export (TREX) complex at least composed of ALYREF/THOC4, DDX39B, SARNP/CIP29, CHTOP and the THO subcomplex; TREX seems to have dynamic structure involving ATP-dependent remodeling; in the complex interacts (methylated) with ALYREF/THOC4 and with DDX39B in a methylation-independent manner. Interacts (methylated) with NXF1; the interaction is mutually exclusive with the NXF1:THOC5 interaction. Interacts with WDR77 and ERH. Asymmetrically methylated by PRMT1. Symmetrically methylated by PRMT5. In terms of tissue distribution, expressed in an erythroid progenitor cell line derived from peripheral blood. Expressed in glioblastoma cells.

The protein localises to the nucleus. It localises to the nucleolus. It is found in the nucleoplasm. The protein resides in the nucleus speckle. Plays an important role in the ligand-dependent activation of estrogen receptor target genes. May play a role in the silencing of fetal globin genes. Recruits the 5FMC complex to ZNF148, leading to desumoylation of ZNF148 and subsequent transactivation of ZNF148 target genes. Plays an important role in the tumorigenicity of glioblastoma cells. Binds to 5-hydroxymethylcytosine (5hmC) and associates with the methylosome complex containing PRMT1, PRMT5, MEP50 and ERH. The CHTOP-methylosome complex associated with 5hmC is recruited to selective sites on the chromosome, where it methylates H4R3 and activates the transcription of genes involved in glioblastomagenesis. Its function is as follows. Required for effective mRNA nuclear export and is a component of the TREX complex which is thought to couple mRNA transcription, processing and nuclear export, and specifically associates with spliced mRNA and not with unspliced pre-mRNA. TREX is recruited to spliced mRNAs by a transcription-independent mechanism, binds to mRNA upstream of the exon-junction complex (EJC) and is recruited in a splicing- and cap-dependent manner to a region near the 5' end of the mRNA where it functions in mRNA export to the cytoplasm via the TAP/NFX1 pathway. The TREX complex is essential for the export of Kaposi's sarcoma-associated herpesvirus (KSHV) intronless mRNAs and infectious virus production. Stimulates DDX39B ATPase and helicase activities. In cooperation with ALYREF/THOC4 enhances NXF1 RNA binding activity. The protein is Chromatin target of PRMT1 protein (CHTOP) of Homo sapiens (Human).